The sequence spans 475 residues: BTB/POZ domain-containing protein 10 (475 aa).

The interval 1–144 is disordered; it reads MAGRPHPYDS…SQSSSDGSCK (144 aa). Basic residues predominate over residues 22–31; the sequence is LHSRPRKLYK. The segment covering 57 to 80 has biased composition (basic and acidic residues); it reads GHERSRDRRRSSDRSRDSSHERAE. A compositionally biased stretch (polar residues) spans 81-94; it reads SQLTPCIRNVTSPT. Basic and acidic residues predominate over residues 97-107; the sequence is HHIEREKDHSS. Over residues 108–144 the composition is skewed to low complexity; it reads SRPSSPRPQRASPNGSMSSAGNSSRNSSQSSSDGSCK. Residues 146–475 form an interaction with AKT family members region; it reads SGEMVFVYEN…LDPDAQNPML (330 aa). Residues 167–241 enclose the BTB domain; it reads ERVTLIVDNT…YKTGIIRCPD (75 aa). The interval 451-475 is disordered; the sequence is ELDILPSHPASGNNDLDPDAQNPML.

In terms of assembly, interacts (via C-terminal 330-amino-acid region) with AKT1; AKT2 and AKT3. Interacts with PPP2CA and PPP1CA. As to expression, ubiquitously expressed (at protein level).

It localises to the nucleus. Its subcellular location is the cytoplasm. In terms of biological role, plays a major role as an activator of AKT family members by inhibiting PPP2CA-mediated dephosphorylation, thereby keeping AKTs activated. Plays a role in preventing motor neuronal death and in accelerating the growth of pancreatic beta cells. The protein is BTB/POZ domain-containing protein 10 (Btbd10) of Mus musculus (Mouse).